Consider the following 66-residue polypeptide: MILVNVHAGNCDNTLKNFKKKLQRELYFRKMKEQRYYETPSAKRVRKAQEAARRQRKFARKKMFDE.

It belongs to the bacterial ribosomal protein bS21 family.

The chain is Small ribosomal subunit protein bS21 from Rickettsia peacockii (strain Rustic).